The primary structure comprises 238 residues: Flagellar L-ring protein (238 aa).

An N-terminal signal peptide occupies residues 1–23 (MVKLFSYKIKYYLTAFFIIIIQS). Cys24 carries N-palmitoyl cysteine lipidation. Cys24 carries the S-diacylglycerol cysteine lipid modification.

It belongs to the FlgH family. In terms of assembly, the basal body constitutes a major portion of the flagellar organelle and consists of four rings (L,P,S, and M) mounted on a central rod.

Its subcellular location is the cell outer membrane. It localises to the bacterial flagellum basal body. Functionally, assembles around the rod to form the L-ring and probably protects the motor/basal body from shearing forces during rotation. The chain is Flagellar L-ring protein from Buchnera aphidicola subsp. Schizaphis graminum (strain Sg).